Reading from the N-terminus, the 393-residue chain is MHPIVIIGSGMAGYTLAREFRKLNPEHELVMICADDAVNYAKPTLSNALSGNKAPEQIPLGDAEKMSTQLKLQILSETWVKAINPETHELKLEKNGQETIQPYSKLVLAVGANPTRLAIAGDGSDDIHVVNSLIDYRAFRENLAKRQDKRVVILGAGLIGCEFANDLQHTGHQVTVIDLSPRPLGRLLPAHIADAFQKNLEESGIHFVLSTTVEKVSKINDGQDYAVTLANGQTLVADIVLSAIGLQPNIDLAKHAGVHTSRGILTNSLLETNLEDIYAIGDCAEVNGTLLPYVMPIMQQARALAKTLSGETTHVHYPAMPVAVKTPAAPLTVLPVPVDVDVNWETEEFEDGMLAKAIDNTDTLRGFVLLGATAGKQRLTLTKLVPDLIPAQL.

Residues 9–12 (SGMA), 33–34 (CA), Lys42, Val80, Glu162, Asp282, Val294, and Lys325 contribute to the FAD site.

Belongs to the FAD-dependent oxidoreductase family. Homodimer. FAD is required as a cofactor.

It localises to the cytoplasm. It carries out the reaction 2 reduced [rubredoxin] + NAD(+) + H(+) = 2 oxidized [rubredoxin] + NADH. Its pathway is hydrocarbon metabolism; alkane degradation. In terms of biological role, involved in the hydrocarbon hydroxylating system, which transfers electrons from NADH to rubredoxin reductase and then through rubredoxin to alkane 1 monooxygenase. The sequence is that of Rubredoxin-NAD(+) reductase (rubB) from Acinetobacter baylyi (strain ATCC 33305 / BD413 / ADP1).